Consider the following 622-residue polypeptide: Procollagen galactosyltransferase 1 (622 aa).

The first 29 residues, 1–29 (MAAAPRAGRRRGQPLLALLLLLLAPLPPG), serve as a signal peptide directing secretion. N-linked (GlcNAc...) asparagine glycans are attached at residues N96, N184, and N381. Residues 588 to 606 (RAKSQKMREQQALSREAKN) show a composition bias toward basic and acidic residues. A disordered region spans residues 588–622 (RAKSQKMREQQALSREAKNSDVLQSPLDSAARDEL). The Endoplasmic reticulum retention motif signature appears at 619-622 (RDEL).

Belongs to the glycosyltransferase 25 family. In terms of processing, N-glycosylated. In terms of tissue distribution, ubiquitous with higher levels in placenta, heart, lung and spleen.

It localises to the endoplasmic reticulum lumen. The catalysed reaction is (5R)-5-hydroxy-L-lysyl-[collagen] + UDP-alpha-D-galactose = (5R)-5-O-(beta-D-galactosyl)-5-hydroxy-L-lysyl-[collagen] + UDP + H(+). In terms of biological role, beta-galactosyltransferase that transfers beta-galactose to hydroxylysine residues of type I collagen. By acting on collagen glycosylation, facilitates the formation of collagen triple helix. Also involved in the biosynthesis of collagen type IV. The protein is Procollagen galactosyltransferase 1 (COLGALT1) of Homo sapiens (Human).